A 209-amino-acid chain; its full sequence is ATP phosphoribosyltransferase (209 aa).

The protein belongs to the ATP phosphoribosyltransferase family. Short subfamily. As to quaternary structure, heteromultimer composed of HisG and HisZ subunits.

It localises to the cytoplasm. It catalyses the reaction 1-(5-phospho-beta-D-ribosyl)-ATP + diphosphate = 5-phospho-alpha-D-ribose 1-diphosphate + ATP. It participates in amino-acid biosynthesis; L-histidine biosynthesis; L-histidine from 5-phospho-alpha-D-ribose 1-diphosphate: step 1/9. Its function is as follows. Catalyzes the condensation of ATP and 5-phosphoribose 1-diphosphate to form N'-(5'-phosphoribosyl)-ATP (PR-ATP). Has a crucial role in the pathway because the rate of histidine biosynthesis seems to be controlled primarily by regulation of HisG enzymatic activity. This chain is ATP phosphoribosyltransferase, found in Alkaliphilus metalliredigens (strain QYMF).